Here is a 458-residue protein sequence, read N- to C-terminus: Argininosuccinate lyase (458 aa).

The protein belongs to the lyase 1 family. Argininosuccinate lyase subfamily.

Its subcellular location is the cytoplasm. The catalysed reaction is 2-(N(omega)-L-arginino)succinate = fumarate + L-arginine. It functions in the pathway amino-acid biosynthesis; L-arginine biosynthesis; L-arginine from L-ornithine and carbamoyl phosphate: step 3/3. This Salmonella schwarzengrund (strain CVM19633) protein is Argininosuccinate lyase.